A 637-amino-acid polypeptide reads, in one-letter code: Anthranilate synthase, phenazine specific (637 aa).

The tract at residues 1–434 (MSQTAAHLME…QREQIQADFS (434 aa)) is anthranilate synthase component I. Residues 437 to 628 (QVLIVDAEDT…LRHALIHTPV (192 aa)) enclose the Glutamine amidotransferase type-1 domain. Residues C517, H602, and E604 each act as for GATase activity in the active site.

It carries out the reaction chorismate + L-glutamine = anthranilate + pyruvate + L-glutamate + H(+). It participates in antibiotic biosynthesis; phenazine biosynthesis. Its function is as follows. Involved in the biosynthesis of the antibiotic, phenazine, a nitrogen-containing heterocyclic molecule having important roles in virulence, competition and biological control. The chain is Anthranilate synthase, phenazine specific (phzB) from Pseudomonas chlororaphis (Pseudomonas aureofaciens).